Consider the following 152-residue polypeptide: Cadmium-induced protein CadI (152 aa).

Residues 2 to 117 (SRVQLALNVD…GGERWEVYTV (116 aa)) enclose the VOC domain.

This sequence to B.subtilis YqcK.

In Mycobacterium tuberculosis (strain CDC 1551 / Oshkosh), this protein is Cadmium-induced protein CadI (cadI).